Here is a 424-residue protein sequence, read N- to C-terminus: UDP-N-acetylglucosamine 1-carboxyvinyltransferase (424 aa).

Residue 22 to 23 coordinates phosphoenolpyruvate; that stretch reads KN. R93 contacts UDP-N-acetyl-alpha-D-glucosamine. Catalysis depends on C117, which acts as the Proton donor. 2-(S-cysteinyl)pyruvic acid O-phosphothioketal is present on C117. Residues 122–126, D307, and V329 each bind UDP-N-acetyl-alpha-D-glucosamine; that span reads RPIDL.

The protein belongs to the EPSP synthase family. MurA subfamily.

Its subcellular location is the cytoplasm. The catalysed reaction is phosphoenolpyruvate + UDP-N-acetyl-alpha-D-glucosamine = UDP-N-acetyl-3-O-(1-carboxyvinyl)-alpha-D-glucosamine + phosphate. The protein operates within cell wall biogenesis; peptidoglycan biosynthesis. Its function is as follows. Cell wall formation. Adds enolpyruvyl to UDP-N-acetylglucosamine. This Pelodictyon phaeoclathratiforme (strain DSM 5477 / BU-1) protein is UDP-N-acetylglucosamine 1-carboxyvinyltransferase.